Consider the following 142-residue polypeptide: Ribosomal RNA large subunit methyltransferase H (142 aa).

The S-adenosyl-L-methionine site is built by leucine 55 and glycine 87.

It belongs to the RNA methyltransferase RlmH family. As to quaternary structure, homodimer.

It localises to the cytoplasm. It catalyses the reaction pseudouridine(1915) in 23S rRNA + S-adenosyl-L-methionine = N(3)-methylpseudouridine(1915) in 23S rRNA + S-adenosyl-L-homocysteine + H(+). Functionally, specifically methylates the pseudouridine at position 1915 (m3Psi1915) in 23S rRNA. The chain is Ribosomal RNA large subunit methyltransferase H from Sphingopyxis alaskensis (strain DSM 13593 / LMG 18877 / RB2256) (Sphingomonas alaskensis).